The sequence spans 242 residues: Lactate utilization protein A 2 (242 aa).

It belongs to the LutA/YkgE family.

In terms of biological role, is involved in L-lactate degradation and allows cells to grow with lactate as the sole carbon source. The protein is Lactate utilization protein A 2 of Bacillus cereus (strain ZK / E33L).